Consider the following 170-residue polypeptide: Peptide deformylase (170 aa).

Residues C91 and H133 each contribute to the Fe cation site. E134 is an active-site residue. A Fe cation-binding site is contributed by H137.

Belongs to the polypeptide deformylase family. Fe(2+) is required as a cofactor.

The catalysed reaction is N-terminal N-formyl-L-methionyl-[peptide] + H2O = N-terminal L-methionyl-[peptide] + formate. Its function is as follows. Removes the formyl group from the N-terminal Met of newly synthesized proteins. Requires at least a dipeptide for an efficient rate of reaction. N-terminal L-methionine is a prerequisite for activity but the enzyme has broad specificity at other positions. The polypeptide is Peptide deformylase (Aeromonas salmonicida (strain A449)).